Consider the following 188-residue polypeptide: Ubiquitin-like protein 4B (188 aa).

A Ubiquitin-like domain is found at 1–76 (MFLTVKLLLG…INVIMRPPED (76 aa)). The disordered stretch occupies residues 146 to 188 (EEKEAPAVASELEQNNGGGGGGGGTGGEGGGKKEEEEGEEADQ). Residues 161-174 (NGGGGGGGGTGGEG) are compositionally biased toward gly residues.

Expressed specifically in post-meiotic male germ cells of the testis. Abundantly expressed in stage 14-16 spermatids.

It localises to the cytoplasm. The protein is Ubiquitin-like protein 4B (Ubl4b) of Mus musculus (Mouse).